Reading from the N-terminus, the 152-residue chain is FAD synthase (152 aa).

ATP-binding positions include 9–10 (TF), 14–17 (HPGH), and Asp92.

Belongs to the archaeal FAD synthase family. In terms of assembly, homodimer. The cofactor is a divalent metal cation.

It carries out the reaction FMN + ATP + H(+) = FAD + diphosphate. It functions in the pathway cofactor biosynthesis; FAD biosynthesis; FAD from FMN: step 1/1. Functionally, catalyzes the transfer of the AMP portion of ATP to flavin mononucleotide (FMN) to produce flavin adenine dinucleotide (FAD) coenzyme. This is FAD synthase from Ferroglobus placidus (strain DSM 10642 / AEDII12DO).